A 226-amino-acid polypeptide reads, in one-letter code: UPF0319 protein YPO1442/y2728/YP_1333 (226 aa).

Positions 1 to 20 are cleaved as a signal peptide; the sequence is MKLGLVAGMLAVCFSFSSVA.

Belongs to the UPF0319 family.

In Yersinia pestis, this protein is UPF0319 protein YPO1442/y2728/YP_1333.